We begin with the raw amino-acid sequence, 180 residues long: ADP-ribosylation factor 1 (180 aa).

A lipid anchor (N-myristoyl glycine) is attached at Gly2. GTP contacts are provided by residues 24-31 (GLDAAGKT), 67-71 (DVGGQ), and 126-129 (NKQD).

The protein belongs to the small GTPase superfamily. Arf family.

It localises to the golgi apparatus. It carries out the reaction GTP + H2O = GDP + phosphate + H(+). GTP-binding protein involved in protein trafficking; may modulate vesicle budding and uncoating within the Golgi apparatus. The protein is ADP-ribosylation factor 1 (arf1) of Schizosaccharomyces pombe (strain 972 / ATCC 24843) (Fission yeast).